Here is a 311-residue protein sequence, read N- to C-terminus: Malate dehydrogenase (311 aa).

NAD(+) is bound by residues 7-13 and Asp-34; that span reads GAAGGIG. The substrate site is built by Arg-81 and Arg-87. NAD(+) is bound by residues Asn-94 and 117-119; that span reads ITN. Substrate-binding residues include Asn-119 and Arg-153. His-177 (proton acceptor) is an active-site residue. Met-227 contacts NAD(+).

It belongs to the LDH/MDH superfamily. MDH type 1 family. Homodimer.

It carries out the reaction (S)-malate + NAD(+) = oxaloacetate + NADH + H(+). Its function is as follows. Catalyzes the reversible oxidation of malate to oxaloacetate. The chain is Malate dehydrogenase from Shewanella pealeana (strain ATCC 700345 / ANG-SQ1).